A 276-amino-acid chain; its full sequence is Short-chain dehydrogenase anuF (276 aa).

Residues Ile-18, Asp-68, Lys-130, Tyr-176, Lys-180, Val-209, and Thr-211 each coordinate NADP(+). Tyr-176 (proton acceptor) is an active-site residue. The active-site Proton donor is Tyr-176. The active-site Lowers pKa of active site Tyr is the Lys-180.

The protein belongs to the short-chain dehydrogenases/reductases (SDR) family.

The enzyme catalyses (2R,9S)-annullatin H + A = (2R)-annullatin F + AH2. In terms of biological role, cytochrome P450 monooxygenase; part of the gene cluster that mediates the biosynthesis of annullatin D, an alkylated aromatic polyketide with a fused dihydrobenzofuran lactone ring system that exhibits potent agonistic activities toward the cannabinoid receptors. Within the pathway, anuF is involved in the formation of (2R)-annullatin F from the diastereomer of (2S,9S)-annullatin H (compound 12). The annullatin backbone 2-hydroxymethyl-3-pentylphenol is assembled from one acetyl-CoA starter unit and 5 malonyl-CoA elongation units by cooperation of the highly reducing polyketide synthase anuA, the short-chain dehydrogenase anuB and the oxidoreductase anuC, before being hydroxylated at the C-5 alkyl chain by the cytochrome P450 monooxygenase anuE to form (8S)-annullatin E. The prenyltransferase anuH subsequently installs one isoprenyl group at the benzene ring to form (8S)-annullatin J. Enzymatic or nonenzymatic dihydro-benzofuran ring formation between the prenyl and the phenolic hydroxyl groups in (8S)-annullatin J results in two diastereomers (2S,9S)-annullatin H and compound 12. The intermediate (2S,9S)-annullatin H is then converted to (2S,9S)-annullatin D by the FAD-linked oxidoreductase anuG-catalyzed five-member lactone ring formation. The isomer 12 acts as a substrate for the short-chain dehydrogenase anuF and is oxidized to (2R)-annullatin F, which is subsequently acetylated by an acetyltransferase leading to (2R)-annullatin G formation. The remaining enzymes identified within the cluster, anuD, anuI and anuJ, seem not to be involved in annullatin biosynthesis. In Penicillium roqueforti (strain FM164), this protein is Short-chain dehydrogenase anuF.